The chain runs to 160 residues: Large ribosomal subunit protein eL21 (160 aa).

Basic and acidic residues-rich tracts occupy residues 112 to 123 (NDQKKKEAKEKG) and 136 to 145 (REAHFVRTNG). The disordered stretch occupies residues 112–145 (NDQKKKEAKEKGTWVQLKRQPAPPREAHFVRTNG).

Belongs to the eukaryotic ribosomal protein eL21 family. In terms of assembly, component of the large ribosomal subunit.

Its subcellular location is the cytoplasm. The protein resides in the cytosol. It is found in the endoplasmic reticulum. Component of the large ribosomal subunit. The ribosome is a large ribonucleoprotein complex responsible for the synthesis of proteins in the cell. This chain is Large ribosomal subunit protein eL21 (RPL21), found in Capra hircus (Goat).